A 643-amino-acid polypeptide reads, in one-letter code: Threonine--tRNA ligase (643 aa).

In terms of domain architecture, TGS spans Met-1–Thr-61. Positions Asp-240–Pro-540 are catalytic. The Zn(2+) site is built by Cys-335, His-386, and His-517.

The protein belongs to the class-II aminoacyl-tRNA synthetase family. As to quaternary structure, homodimer. The cofactor is Zn(2+).

It localises to the cytoplasm. The catalysed reaction is tRNA(Thr) + L-threonine + ATP = L-threonyl-tRNA(Thr) + AMP + diphosphate + H(+). Catalyzes the attachment of threonine to tRNA(Thr) in a two-step reaction: L-threonine is first activated by ATP to form Thr-AMP and then transferred to the acceptor end of tRNA(Thr). Also edits incorrectly charged L-seryl-tRNA(Thr). The chain is Threonine--tRNA ligase from Clostridium perfringens (strain SM101 / Type A).